The primary structure comprises 416 residues: Protein-glutamine gamma-glutamyltransferase (416 aa).

The tat-type signal signal peptide spans 1–29 (MHKRRRLLAFATVGAVICTAGFTPSVSQA). A propeptide spanning residues 30–85 (ASSGDGEEKGSYAETHGLTADDVESINALNERALTLGQPGKPPKELPPSASAPSRA) is cleaved from the precursor. The disordered stretch occupies residues 64-103 (TLGQPGKPPKELPPSASAPSRAPSDDRETPPAEPLDRMPE). A compositionally biased stretch (low complexity) spans 76–85 (PPSASAPSRA). Residues 86–103 (PSDDRETPPAEPLDRMPE) show a composition bias toward basic and acidic residues. Cys149 is a catalytic residue. The tract at residues 290–331 (GQDQRGSSDKRKYGDPEAFRPDQGTGLVDMSKDRSIPRSPAK) is disordered. Basic and acidic residues predominate over residues 295-309 (GSSDKRKYGDPEAFR). Residues Asp340 and His359 contribute to the active site.

This sequence belongs to the bacterial TGase family. Post-translationally, predicted to be exported by the Tat system. The position of the signal peptide cleavage has not been experimentally proven.

It carries out the reaction L-glutaminyl-[protein] + L-lysyl-[protein] = [protein]-L-lysyl-N(6)-5-L-glutamyl-[protein] + NH4(+). In terms of biological role, catalyzes the cross-linking of proteins and the conjugation of polyamines to proteins. In Streptomyces cinnamoneus (Streptoverticillium cinnamoneum), this protein is Protein-glutamine gamma-glutamyltransferase.